We begin with the raw amino-acid sequence, 434 residues long: [Pyruvate dehydrogenase (acetyl-transferring)] kinase isozyme 1, mitochondrial (434 aa).

The transit peptide at 1 to 26 directs the protein to the mitochondrion; that stretch reads MRLARLLRGGTSVRPLCAVPCASRSL. Tyrosine 136 bears the Phosphotyrosine; by FGFR1 mark. The 231-residue stretch at 161-391 folds into the Histidine kinase domain; the sequence is TEYKESFGVD…DAVIYIKALS (231 aa). Tyrosine 241 carries the phosphotyrosine; by FGFR1, ABL1, FLT3 and JAK2 modification. Tyrosine 242 is subject to Phosphotyrosine; by FGFR1. Residues 277 to 284, aspartate 316, 335 to 336, and 352 to 357 contribute to the ATP site; these read ELFKNAMR, ST, and GFGYGL. Threonine 336 bears the Phosphothreonine mark. Lysine 403 carries the N6-succinyllysine modification.

This sequence belongs to the PDK/BCKDK protein kinase family. In terms of assembly, homodimer, and heterodimer with PDK2. Interacts with the pyruvate dehydrogenase complex subunit DLAT, and is part of the multimeric pyruvate dehydrogenase complex that contains multiple copies of pyruvate dehydrogenase (E1), dihydrolipoamide acetyltransferase (DLAT, E2) and lipoamide dehydrogenase (DLD, E3). Interacts with phosphoglycerate kinase PGK1; the interaction is direct, occurs under hypoxic conditions and leads to PDK1-mediated inhibition of pyruvate dehydrogenase complex activity. In terms of processing, phosphorylated by constitutively activated ABL1, FGFR1, FLT3 and JAK2 (in vitro), and this may also occur in cancer cells that express constitutively activated ABL1, FGFR1, FLT3 and JAK2. Phosphorylation at Tyr-241 and Tyr-242 strongly increases kinase activity, while phosphorylation at Tyr-136 has a lesser effect. Phosphorylated under hypoxic conditions at Thr-336 by phosphoglycerate kinase PGK1 which has an activating effect. As to expression, detected in pancreas islets (at protein level). Expressed predominantly in the heart.

Its subcellular location is the mitochondrion matrix. The enzyme catalyses L-seryl-[pyruvate dehydrogenase E1 alpha subunit] + ATP = O-phospho-L-seryl-[pyruvate dehydrogenase E1 alpha subunit] + ADP + H(+). With respect to regulation, activated by binding to the pyruvate dehydrogenase complex subunit DLAT. Strongly activated by NADH plus acetyl-coenzyme A. Inhibited by dichloroacetate. Functionally, kinase that plays a key role in regulation of glucose and fatty acid metabolism and homeostasis via phosphorylation of the pyruvate dehydrogenase subunits PDHA1 and PDHA2. This inhibits pyruvate dehydrogenase activity, and thereby regulates metabolite flux through the tricarboxylic acid cycle, down-regulates aerobic respiration and inhibits the formation of acetyl-coenzyme A from pyruvate. Plays an important role in cellular responses to hypoxia and is important for cell proliferation under hypoxia. The chain is [Pyruvate dehydrogenase (acetyl-transferring)] kinase isozyme 1, mitochondrial (Pdk1) from Rattus norvegicus (Rat).